Reading from the N-terminus, the 525-residue chain is Probable malate:quinone oxidoreductase (525 aa).

The protein belongs to the MQO family. It depends on FAD as a cofactor.

The enzyme catalyses (S)-malate + a quinone = a quinol + oxaloacetate. It participates in carbohydrate metabolism; tricarboxylic acid cycle; oxaloacetate from (S)-malate (quinone route): step 1/1. The sequence is that of Probable malate:quinone oxidoreductase from Serratia proteamaculans (strain 568).